Reading from the N-terminus, the 181-residue chain is Ribonuclease HII (181 aa).

One can recognise an RNase H type-2 domain in the interval 1 to 181 (MICGIDEVGR…SLHRKSFQLI (181 aa)). Residues Asp6, Glu7, and Asp98 each contribute to the a divalent metal cation site.

It belongs to the RNase HII family. Mn(2+) is required as a cofactor. It depends on Mg(2+) as a cofactor.

Its subcellular location is the cytoplasm. It carries out the reaction Endonucleolytic cleavage to 5'-phosphomonoester.. Endonuclease that specifically degrades the RNA of RNA-DNA hybrids. In Borrelia duttonii (strain Ly), this protein is Ribonuclease HII.